We begin with the raw amino-acid sequence, 227 residues long: 2,3-bisphosphoglycerate-dependent phosphoglycerate mutase (227 aa).

Residues 8-15 (RHGQSIWN), 21-22 (TG), Arg-58, 110-113 (ERYY), Lys-121, 137-138 (RR), and 181-182 (GN) each bind substrate. His-9 (tele-phosphohistidine intermediate) is an active-site residue. Glu-110 (proton donor/acceptor) is an active-site residue.

It belongs to the phosphoglycerate mutase family. BPG-dependent PGAM subfamily. Homodimer.

The catalysed reaction is (2R)-2-phosphoglycerate = (2R)-3-phosphoglycerate. The protein operates within carbohydrate degradation; glycolysis; pyruvate from D-glyceraldehyde 3-phosphate: step 3/5. In terms of biological role, catalyzes the interconversion of 2-phosphoglycerate and 3-phosphoglycerate. The polypeptide is 2,3-bisphosphoglycerate-dependent phosphoglycerate mutase (Pseudoalteromonas atlantica (strain T6c / ATCC BAA-1087)).